The sequence spans 474 residues: Gamma-aminobutyric acid receptor subunit gamma-2 (474 aa).

Positions 1 to 38 (MSSPNTWSIGSSVYSPVFSQKMTLWILLLLSLYPGFTS) are cleaved as a signal peptide. Residues 39-274 (QKSDDDYEDY…FDLSRRMGYF (236 aa)) lie on the Extracellular side of the membrane. N-linked (GlcNAc...) asparagine glycans are attached at residues asparagine 51 and asparagine 128. Cysteine 189 and cysteine 203 are joined by a disulfide. Asparagine 246 carries N-linked (GlcNAc...) asparagine glycosylation. The chain crosses the membrane as a helical span at residues 275–295 (TIQTYIPCTLIVVLSWVSFWI). Residues 296 to 301 (NKDAVP) are Cytoplasmic-facing. The chain crosses the membrane as a helical span at residues 302–321 (ARTSLGITTVLTMTTLSTIA). Topologically, residues 322–333 (RKSLPKVSYVTA) are extracellular. A helical membrane pass occupies residues 334–358 (MDLFVSVCFIFVFSALVEYGTLHYF). Residues 359–450 (VSNRKPSKDK…IHIRIAKMDS (92 aa)) lie on the Cytoplasmic side of the membrane. Serine 381 is modified (phosphoserine; by PKC). The helical transmembrane segment at 451-472 (YARIFFPTAFCLFNLVYWVSYL) threads the bilayer. Residues 473-474 (YL) are Extracellular-facing.

This sequence belongs to the ligand-gated ion channel (TC 1.A.9) family. Gamma-aminobutyric acid receptor (TC 1.A.9.5) subfamily. GABRG2 sub-subfamily. Heteropentamer, formed by a combination of alpha (GABRA1-6), beta (GABRB1-3), gamma (GABRG1-3), delta (GABRD), epsilon (GABRE), rho (GABRR1-3), pi (GABRP) and theta (GABRQ) chains, each subunit exhibiting distinct physiological and pharmacological properties. Interacts with GABARAP. Interacts with KIF21B. Identified in a complex of 720 kDa composed of LHFPL4, NLGN2, GABRA1, GABRB2, GABRG2 and GABRB3. Interacts with LHFPL4. Interacts with SHISA7; interaction leads to the regulation of GABA(A) receptor trafficking, channel deactivation kinetics and pharmacology. Post-translationally, glycosylated. In terms of processing, palmitoylated by ZDHHC3/GODZ; required for the accumulation of GABA(A) receptors at the postsynaptic membrane of inhibitory GABAergic synapses. Expressed in brain neurons (at protein level).

It is found in the postsynaptic cell membrane. It localises to the cell membrane. The protein localises to the cell projection. Its subcellular location is the dendrite. The protein resides in the cytoplasmic vesicle membrane. The catalysed reaction is chloride(in) = chloride(out). Allosterically activated by benzodiazepines. Activated by pentobarbital. Inhibited by the antagonist bicuculline. Inhibited by zinc ions. Potentiated by histamine. Functionally, gamma subunit of the heteropentameric ligand-gated chloride channel gated by gamma-aminobutyric acid (GABA), a major inhibitory neurotransmitter in the brain. GABA-gated chloride channels, also named GABA(A) receptors (GABAAR), consist of five subunits arranged around a central pore and contain GABA active binding site(s) located at the alpha and beta subunit interface(s). When activated by GABA, GABAARs selectively allow the flow of chloride anions across the cell membrane down their electrochemical gradient. Gamma-2/GABRG2-containing GABAARs are found at both synaptic and extrasynaptic sites. Chloride influx into the postsynaptic neuron following GABAAR opening decreases the neuron ability to generate a new action potential, thereby reducing nerve transmission. GABAARs containing alpha-1 and beta-2 or -3 subunits exhibit synaptogenic activity; the gamma-2 subunit being necessary but not sufficient to induce rapid synaptic contacts formation. Extrasynaptic gamma-2-containing receptors contribute to the tonic GABAergic inhibition. GABAARs function also as histamine receptor where histamine binds at the interface of two neighboring beta subunits and potentiates GABA response in a gamma-2 subunit-controlled manner. The polypeptide is Gamma-aminobutyric acid receptor subunit gamma-2 (Mus musculus (Mouse)).